Reading from the N-terminus, the 192-residue chain is BREX protein BrxB (192 aa).

It belongs to the BrxB family.

Functionally, BREX systems (bacteriophage exclusion) provide immunity against bacteriophage. Part of a type 1 BREX system. This system allows phage adsorption but prevents phage DNA replication, without degradation of the phage DNA. Methylation of bacterial DNA by PglX probably guides self/non-self discrimination. When the brxA-brxB-brxC-pglX and pglZ-brxL operons are transformed into a susceptible B.subtilis strain (BEST7003) they confer resistance to bacteriophages SPbeta, SP16, Zeta, phi3T and SP02 and partial protection to phages SP01 and SP82G (these include lytic and temperate phage). They do not protect against phages phi105, rho10 or rho14. Additionally confers a very slight reduction in efficiency of plasmid transformation. The polypeptide is BREX protein BrxB (Bacillus cereus (strain H3081.97)).